The sequence spans 101 residues: Small ribosomal subunit protein uS14 (101 aa).

The protein belongs to the universal ribosomal protein uS14 family. As to quaternary structure, part of the 30S ribosomal subunit. Contacts proteins S3 and S10.

Functionally, binds 16S rRNA, required for the assembly of 30S particles and may also be responsible for determining the conformation of the 16S rRNA at the A site. This Shewanella sp. (strain ANA-3) protein is Small ribosomal subunit protein uS14.